The primary structure comprises 200 residues: MFSGIIQELGEVCFFEAQGNGLSLGIKSTPLFVTPLVTGDSVAVDGVCLTLTSCNESKIFFDVIPETLACTTLGEKRCSDQVNLEAALKMGDSIGGHLLSGHVFGTAEIFLIKENRYYFRGSKELSQYLFEKGFIAIDGISLTLVSVDSDTFSVGLIPETLQRTTLGKKREGERVNIEIDMSTKIQVDTVKRILASSGKD.

2 Lumazine-binding repeats span residues M1–H97 and L98–V190. Residues G4–I6, C48–T50, D62–T67, G101–V103, K132, S141–T143, and G155–T160 each bind 2,4-dihydroxypteridine.

As to quaternary structure, homotrimer.

The catalysed reaction is 2 6,7-dimethyl-8-(1-D-ribityl)lumazine + H(+) = 5-amino-6-(D-ribitylamino)uracil + riboflavin. It participates in cofactor biosynthesis; riboflavin biosynthesis; riboflavin from 2-hydroxy-3-oxobutyl phosphate and 5-amino-6-(D-ribitylamino)uracil: step 2/2. Its function is as follows. Catalyzes the dismutation of two molecules of 6,7-dimethyl-8-ribityllumazine, resulting in the formation of riboflavin and 5-amino-6-(D-ribitylamino)uracil. This is Riboflavin synthase (ribE) from Chlamydia pneumoniae (Chlamydophila pneumoniae).